The primary structure comprises 1458 residues: RNA-directed RNA polymerase P1 (1458 aa).

The interval 148-168 is disordered; it reads LSQDDRDEKGNDNREEEDVKN. The RdRp catalytic domain maps to 686-894; it reads VGIGFATIYQ…KTVISHISGE (209 aa). The segment at 971 to 993 is disordered; sequence DESIENKPNRRGSKAKARSTKTN. Positions 979-989 are enriched in basic residues; it reads NRRGSKAKARS.

This sequence belongs to the reoviridae RNA-directed RNA polymerase family.

It localises to the virion. The protein resides in the host cytoplasm. It catalyses the reaction RNA(n) + a ribonucleoside 5'-triphosphate = RNA(n+1) + diphosphate. In terms of biological role, RNA-directed RNA polymerase that is involved in both transcription and genome replication. Together with the capping enzyme P5 and protein P7, forms an enzyme complex positioned near the channels situated at each of the five-fold vertices of the core. This Nephotettix cincticeps (Green rice leafhopper) protein is RNA-directed RNA polymerase P1.